The following is a 370-amino-acid chain: Aspartate beta-hydroxylase domain-containing protein 2 (370 aa).

Over 1-57 (MVWALPRTSSPSCIAPSYKPDSGWIKMSAEWLIDWSCLLNGLRDLIAGCIQAVRDCN) the chain is Cytoplasmic. Residues 58-78 (SFALTTVICLLMLFAWYCYRV) form a helical membrane-spanning segment. The Lumenal segment spans residues 79–370 (GKDQPRSPFA…ALDSIFAPGR (292 aa)). Asparagine 212 is a glycosylation site (N-linked (GlcNAc...) asparagine). Tryptophan 229 and serine 273 together coordinate 2-oxoglutarate. Histidine 284 provides a ligand contact to Fe cation. 2-oxoglutarate is bound at residue 293–295 (RCH). Histidine 329 provides a ligand contact to Fe cation. Arginine 342 provides a ligand contact to 2-oxoglutarate.

Belongs to the aspartyl/asparaginyl beta-hydroxylase family. Requires Fe cation as cofactor.

Its subcellular location is the membrane. May function as 2-oxoglutarate-dependent dioxygenase. This chain is Aspartate beta-hydroxylase domain-containing protein 2 (asphd2), found in Xenopus tropicalis (Western clawed frog).